The primary structure comprises 155 residues: Protein SprT-like (155 aa).

A SprT-like domain is found at 6–148 (LQRLVERVSL…VCGQCGGKLM (143 aa)). Histidine 67 provides a ligand contact to Zn(2+). Glutamate 68 is an active-site residue. Position 71 (histidine 71) interacts with Zn(2+).

Belongs to the SprT family. Requires Zn(2+) as cofactor.

The protein localises to the cytoplasm. The sequence is that of Protein SprT-like from Geobacillus sp. (strain WCH70).